We begin with the raw amino-acid sequence, 318 residues long: Transaldolase (318 aa).

Residue Lys-126 is the Schiff-base intermediate with substrate of the active site.

The protein belongs to the transaldolase family. Type 1 subfamily. Homodimer.

The protein resides in the cytoplasm. The enzyme catalyses D-sedoheptulose 7-phosphate + D-glyceraldehyde 3-phosphate = D-erythrose 4-phosphate + beta-D-fructose 6-phosphate. It participates in carbohydrate degradation; pentose phosphate pathway; D-glyceraldehyde 3-phosphate and beta-D-fructose 6-phosphate from D-ribose 5-phosphate and D-xylulose 5-phosphate (non-oxidative stage): step 2/3. Transaldolase is important for the balance of metabolites in the pentose-phosphate pathway. The protein is Transaldolase of Cupriavidus necator (strain ATCC 17699 / DSM 428 / KCTC 22496 / NCIMB 10442 / H16 / Stanier 337) (Ralstonia eutropha).